The chain runs to 91 residues: Small ribosomal subunit protein bS20 (91 aa).

Over residues 1 to 18 (MPLHKSAEKRLRQSDRKN) the composition is skewed to basic and acidic residues. The segment at 1 to 25 (MPLHKSAEKRLRQSDRKNARNRARK) is disordered.

The protein belongs to the bacterial ribosomal protein bS20 family.

Functionally, binds directly to 16S ribosomal RNA. The protein is Small ribosomal subunit protein bS20 of Chlorobium phaeovibrioides (strain DSM 265 / 1930) (Prosthecochloris vibrioformis (strain DSM 265)).